We begin with the raw amino-acid sequence, 312 residues long: Ribosomal RNA small subunit methyltransferase H (312 aa).

Residues 34–36 (GGH), Asp54, Phe81, Asp102, and Gln109 each bind S-adenosyl-L-methionine.

The protein belongs to the methyltransferase superfamily. RsmH family.

The protein resides in the cytoplasm. The catalysed reaction is cytidine(1402) in 16S rRNA + S-adenosyl-L-methionine = N(4)-methylcytidine(1402) in 16S rRNA + S-adenosyl-L-homocysteine + H(+). Functionally, specifically methylates the N4 position of cytidine in position 1402 (C1402) of 16S rRNA. The sequence is that of Ribosomal RNA small subunit methyltransferase H from Geotalea uraniireducens (strain Rf4) (Geobacter uraniireducens).